The primary structure comprises 891 residues: MNLHLVDSDGHLEAEKKLTEYLTSIVAPSVSPSRGSATADGDYGNGALEAVGLNYHVVGVFGGQSSGKSTLLNHLFGTHFQMLDETVRRGQTTKGAFMALANTALAGLEASDVAVVAPRLAPSAADRSSRLNHAVAAAVTNNTTGGAPPTGSPLLVLDFEGTDGLERGEDQCFERQLSLFGLSIVDTLIINMWAVDVGRFNAANLSLLRTIFEVNLQLFSHSNYEAEEKPTLLVVLRDFTEDDPLPSLTTVRKSFDTIWESITRPAQFEDTSIDALFHLKYYVMPHYRLQKEEFMASVETLRRWFGDSRCSDYLFSYHSMFRGVPLDGLPAYLTNCWAAIRTSKDLDIPTQREMLAQHRCKEAKEQELMTYRDFARGYEDRLLRGEMLLRLSEVLDEEMETRLTAFYRQTKLYSSAVVGQYANELETELVDATMQVLNRLSKAIATEVLSNVESRVLNSVEESLRQLLKSAQTLPFSAGEDSSTTEPAEAHDADEDAARLLGAQRMDSAACQRLVRGFWRTLSIQVKEVVAEVAAMPPRAHLYGRYAVLIVQDPTTRLNVLNIVTDAFFQKVKSRLVSMANSACDTMHSGFERSLTYNSDGTVRFFATTRGLQKAVPAAVQAGLVVLGSLFYFRLKLVSAAVSDDDDLDTGATAALPQSRSARRVRHNRCHIVFDDNDAEAAFYLSYSTLDTAPKYPCDVPVPTLDCDREEVGVAADCVLLSQQATVRAYELYKQKCDFTTQLQLRAAEAGNQRLPAWVIPALFILGWNELLYVLTSPALLVLVVVICAVFFRQFFVSQWHAFEETGPASVVIPVRTVVHALSALVRSLLGDGQGSCPERAARNGSDVVASGEREMAHVKVTSTHADPAPSNTTVPTAQATMRHRTTHKLD.

Over 1–754 the chain is Cytoplasmic; the sequence is MNLHLVDSDG…LRAAEAGNQR (754 aa). The GB1/RHD3-type G domain occupies 52–318; the sequence is GLNYHVVGVF…RCSDYLFSYH (267 aa). 62–69 contributes to the GTP binding site; it reads GGQSSGKS. Residues 755–775 form a helical membrane-spanning segment; sequence LPAWVIPALFILGWNELLYVL. At 776–778 the chain is on the lumenal side; sequence TSP. A helical transmembrane segment spans residues 779 to 799; it reads ALLVLVVVICAVFFRQFFVSQ. Over 800-891 the chain is Cytoplasmic; that stretch reads WHAFEETGPA…MRHRTTHKLD (92 aa). A compositionally biased stretch (polar residues) spans 863–880; sequence STHADPAPSNTTVPTAQA. The interval 863–891 is disordered; that stretch reads STHADPAPSNTTVPTAQATMRHRTTHKLD. Positions 882–891 are enriched in basic residues; the sequence is MRHRTTHKLD.

It belongs to the TRAFAC class dynamin-like GTPase superfamily. GB1/RHD3 GTPase family. RHD3 subfamily.

It localises to the endoplasmic reticulum membrane. In terms of biological role, probable GTP-binding protein that may be involved in cell development. The polypeptide is Protein SEY1 homolog (Leishmania braziliensis).